The chain runs to 1155 residues: Protein BREAST CANCER SUSCEPTIBILITY 2 homolog B (1155 aa).

BRCA2 repeat units follow at residues 63–97 (MPGEIPMFRTGLGKSVVLKESSIAKAKSILAENVA), 116–150 (TAETMPMFRTALGKTVPLKESSIAKPLSILGSDMI), 163–197 (FGVPNSLFQTASNKKVNVSSAGLARAKALLGLEED), and 257–291 (LKVPPTKFQTAGGKSLSVSAEALKRARNLLGDPEL).

In terms of assembly, interacts with RAD51 and DMC1. Interacts with DSS1(I) and DSS1(V). Can interact with both RAD51 and DSS1(I) or both DMC1 and DSS1(I) in a tripartite complex. In terms of tissue distribution, expressed in flower buds.

In terms of biological role, involved in double-strand break repair and/or homologous recombination by mediating RAD51- and DMC1-facilitated DNA repair. Plays an essential role in both somatic and meiotic homologous recombination. Is crucial for the formation of RAD51 and DMC1 foci during male meiotic homologous recombination in prophase I. This chain is Protein BREAST CANCER SUSCEPTIBILITY 2 homolog B, found in Arabidopsis thaliana (Mouse-ear cress).